The chain runs to 585 residues: Testis-specific serine kinase substrate (585 aa).

Over residues 91 to 108 (EPDSSGTDSTTEDSGPLA) the composition is skewed to low complexity. Residues 91–125 (EPDSSGTDSTTEDSGPLALPGPPASPTTPWAPEDP) form a disordered region. Ser224 carries the phosphoserine modification. Disordered regions lie at residues 264–312 (HGLS…SEQE) and 559–585 (LEGS…GSEQ). The residue at position 281 (Ser281) is a Phosphoserine; by TSSK1 and TSSK2. At Ser309 the chain carries Phosphoserine.

In terms of processing, phosphorylated on serine residue(s) by STK22A/TSSK1 and STK22B/TSSK2. In terms of tissue distribution, testis specific.

It localises to the cytoplasm. It is found in the cytoskeleton. Its subcellular location is the microtubule organizing center. The protein localises to the centrosome. The protein resides in the centriole. It localises to the cytoplasmic vesicle. It is found in the secretory vesicle. Its subcellular location is the acrosome. Its function is as follows. May play a role in testicular physiology, most probably in the process of spermatogenesis or spermatid development. In Mus musculus (Mouse), this protein is Testis-specific serine kinase substrate (Tsks).